The following is a 553-amino-acid chain: Putative transport protein YidE (553 aa).

Transmembrane regions (helical) follow at residues 4–24 (IALTVSILALVAVVGLFIGNV), 28–48 (GIGLGIGGVLFGGIIVGHFVS), 65–85 (FGLILFVYTIGIQVGPGFFAS), 95–115 (LFAVLIVIIGGLVTAILHKLF), and 158–178 (MSYAMAYPFGICGILFTMWML). RCK C-terminal domains lie at 191–276 (QQHE…VIGQ) and 279–361 (DTSL…VLGN). 6 consecutive transmembrane segments (helical) span residues 371 to 391 (MLPVFIGIGLGVLLGSIPVFV), 393 to 413 (GFPAALKLGLAGGPLIMALIL), 439 to 459 (IVLFLSVVGLKSGGDFVNTLV), 464 to 484 (LSWIGYGALITAVPLITVGIL), 493 to 513 (YLTMCGMLAGSMTDPPALAFA), and 533 to 553 (LVMFLRIITPQLLAVLFWSIG).

Belongs to the AAE transporter (TC 2.A.81) family. YidE subfamily.

The protein resides in the cell membrane. In Shigella boydii serotype 4 (strain Sb227), this protein is Putative transport protein YidE.